The following is a 311-amino-acid chain: tRNA dimethylallyltransferase (311 aa).

An ATP-binding site is contributed by 13–20 (GPTASGKT). Residue 15–20 (TASGKT) coordinates substrate. 2 interaction with substrate tRNA regions span residues 38–41 (DSMQ) and 166–170 (QRVLR).

This sequence belongs to the IPP transferase family. In terms of assembly, monomer. Mg(2+) serves as cofactor.

It catalyses the reaction adenosine(37) in tRNA + dimethylallyl diphosphate = N(6)-dimethylallyladenosine(37) in tRNA + diphosphate. Its function is as follows. Catalyzes the transfer of a dimethylallyl group onto the adenine at position 37 in tRNAs that read codons beginning with uridine, leading to the formation of N6-(dimethylallyl)adenosine (i(6)A). The protein is tRNA dimethylallyltransferase of Staphylococcus aureus (strain bovine RF122 / ET3-1).